Here is a 337-residue protein sequence, read N- to C-terminus: GTPase Obg (337 aa).

The Obg domain occupies 1-158; the sequence is MFIDEVRILV…KRLRLELKLL (158 aa). 2 stretches are compositionally biased toward basic and acidic residues: residues 61–74 and 137–146; these read NPEHKAERGRHGEG and PTEHEPGRPG. Disordered stretches follow at residues 61 to 83 and 119 to 146; these read NPEHKAERGRHGEGSQRTGAEGR and GGRGGRGNQHFATPTHQAPTEHEPGRPG. In terms of domain architecture, OBG-type G spans 159–330; that stretch reads ADVGLVGFPN…LKHAMADRVL (172 aa). GTP contacts are provided by residues 165-172, 190-194, 212-215, 282-285, and 311-313; these read GFPNAGKS, FTTLE, DIPG, TKMD, and SSA. The Mg(2+) site is built by S172 and T192.

It belongs to the TRAFAC class OBG-HflX-like GTPase superfamily. OBG GTPase family. As to quaternary structure, monomer. Requires Mg(2+) as cofactor.

The protein resides in the cytoplasm. Functionally, an essential GTPase which binds GTP, GDP and possibly (p)ppGpp with moderate affinity, with high nucleotide exchange rates and a fairly low GTP hydrolysis rate. Plays a role in control of the cell cycle, stress response, ribosome biogenesis and in those bacteria that undergo differentiation, in morphogenesis control. This Solibacter usitatus (strain Ellin6076) protein is GTPase Obg.